Reading from the N-terminus, the 184-residue chain is ADP-ribosylation factor-like protein 2 (184 aa).

Gly2 carries N-myristoyl glycine lipidation. 23-30 (GLDNAGKT) contacts GTP. Residue Ser45 is modified to Phosphoserine. Residues 66–70 (DVGGQ) and Gly68 contribute to the GTP site. Lys71 participates in a covalent cross-link: Glycyl lysine isopeptide (Lys-Gly) (interchain with G-Cter in ubiquitin). 125 to 128 (NKQD) contributes to the GTP binding site.

It belongs to the small GTPase superfamily. Arf family. Found in a complex with ARL2, ARL2BP and SLC25A6. Found in a complex with at least ARL2, PPP2CB, PPP2R1A, PPP2R2A, PPP2R5E and TBCD. Interacts with ELMOD2. The GTP-bound form interacts with ARL2BP. The GDP-bound form interacts preferentially with TBCD. Interacts with UNC119. Found in a complex with ARL2, ARL2BP and SLC25A4. The GTP-bound form interacts with PDE6D. Post-translationally, not N-myristoylated. Expressed in brain, retina, lung, cerebellum, liver, kidney, hippocampus, spleen, cortex and heart (at protein level).

It is found in the mitochondrion intermembrane space. Its subcellular location is the cytoplasm. The protein resides in the cytoskeleton. The protein localises to the microtubule organizing center. It localises to the centrosome. It is found in the nucleus. Small GTP-binding protein which cycles between an inactive GDP-bound and an active GTP-bound form, and the rate of cycling is regulated by guanine nucleotide exchange factors (GEF) and GTPase-activating proteins (GAP). GTP-binding protein that does not act as an allosteric activator of the cholera toxin catalytic subunit. Regulates formation of new microtubules and centrosome integrity. Prevents the TBCD-induced microtubule destruction. Participates in association with TBCD, in the disassembly of the apical junction complexes. Antagonizes the effect of TBCD on epithelial cell detachment and tight and adherens junctions disassembly. Together with ARL2, plays a role in the nuclear translocation, retention and transcriptional activity of STAT3. Component of a regulated secretory pathway involved in Ca(2+)-dependent release of acetylcholine. Required for normal progress through the cell cycle. The sequence is that of ADP-ribosylation factor-like protein 2 (Arl2) from Rattus norvegicus (Rat).